We begin with the raw amino-acid sequence, 331 residues long: 6-phosphogluconolactonase (331 aa).

The protein belongs to the cycloisomerase 2 family.

The enzyme catalyses 6-phospho-D-glucono-1,5-lactone + H2O = 6-phospho-D-gluconate + H(+). It functions in the pathway carbohydrate degradation; pentose phosphate pathway; D-ribulose 5-phosphate from D-glucose 6-phosphate (oxidative stage): step 2/3. Catalyzes the hydrolysis of 6-phosphogluconolactone to 6-phosphogluconate. This chain is 6-phosphogluconolactonase, found in Klebsiella pneumoniae (strain 342).